Consider the following 207-residue polypeptide: ATP phosphoribosyltransferase (207 aa).

This sequence belongs to the ATP phosphoribosyltransferase family. Short subfamily. Heteromultimer composed of HisG and HisZ subunits.

The protein localises to the cytoplasm. It carries out the reaction 1-(5-phospho-beta-D-ribosyl)-ATP + diphosphate = 5-phospho-alpha-D-ribose 1-diphosphate + ATP. It functions in the pathway amino-acid biosynthesis; L-histidine biosynthesis; L-histidine from 5-phospho-alpha-D-ribose 1-diphosphate: step 1/9. Functionally, catalyzes the condensation of ATP and 5-phosphoribose 1-diphosphate to form N'-(5'-phosphoribosyl)-ATP (PR-ATP). Has a crucial role in the pathway because the rate of histidine biosynthesis seems to be controlled primarily by regulation of HisG enzymatic activity. The chain is ATP phosphoribosyltransferase from Geobacillus kaustophilus (strain HTA426).